The chain runs to 594 residues: DNA ligase (594 aa).

NAD(+) is bound by residues 32-36, 81-82, and Glu118; these read DEEYD and SL. Catalysis depends on Lys120, which acts as the N6-AMP-lysine intermediate. Arg141, Glu181, Lys299, and Lys323 together coordinate NAD(+). 4 residues coordinate Zn(2+): Cys417, Cys420, Cys436, and Cys442.

Belongs to the NAD-dependent DNA ligase family. LigA subfamily. The cofactor is Mg(2+). Mn(2+) serves as cofactor.

It carries out the reaction NAD(+) + (deoxyribonucleotide)n-3'-hydroxyl + 5'-phospho-(deoxyribonucleotide)m = (deoxyribonucleotide)n+m + AMP + beta-nicotinamide D-nucleotide.. Its function is as follows. DNA ligase that catalyzes the formation of phosphodiester linkages between 5'-phosphoryl and 3'-hydroxyl groups in double-stranded DNA using NAD as a coenzyme and as the energy source for the reaction. It is essential for DNA replication and repair of damaged DNA. The chain is DNA ligase from Blochmanniella floridana.